A 493-amino-acid polypeptide reads, in one-letter code: High affinity nitrate transporter 2.7 (493 aa).

Positions 1 to 19 (MEPSQRNTKPPSFSDSTIP) are enriched in polar residues. The disordered stretch occupies residues 1-20 (MEPSQRNTKPPSFSDSTIPV). The next 12 helical transmembrane spans lie at 46 to 66 (WLSL…VPVI), 70 to 90 (LNLS…GSIF), 113 to 133 (FLTA…SFIL), 136 to 156 (FFVG…SSMF), 174 to 194 (VGAG…AEFL), 202 to 222 (VSFV…LLYG), 257 to 277 (FVEI…ALLY), 299 to 319 (FGVN…SNIA), 341 to 361 (LWGL…LGRV), 368 to 388 (ILVM…VFGV), 400 to 420 (VAGI…FLLF), and 431 to 451 (ISLM…IYFP).

This sequence belongs to the major facilitator superfamily. Nitrate/nitrite porter (TC 2.A.1.8) family. In terms of tissue distribution, expressed in seeds, leaves and shoots. Lower expression in roots.

The protein localises to the vacuole membrane. In terms of biological role, involved in high-affinity nitrate transport. Controls nitrate content in seeds. The sequence is that of High affinity nitrate transporter 2.7 (NRT2.7) from Arabidopsis thaliana (Mouse-ear cress).